A 261-amino-acid polypeptide reads, in one-letter code: Hydrolase in agr operon (261 aa).

Residues Met1–Leu239 enclose the CN hydrolase domain. The active-site Proton acceptor is Glu41. Residue Lys110 is the Proton donor of the active site. Residue Cys146 is the Nucleophile of the active site.

It belongs to the carbon-nitrogen hydrolase superfamily. NIT1/NIT2 family.

In Staphylococcus aureus, this protein is Hydrolase in agr operon.